The following is a 180-amino-acid chain: Stathmin-3 (180 aa).

2 S-palmitoyl cysteine lipidation sites follow: Cys22 and Cys24. Residues 38–180 (GDMEVKQLDK…NKEQREEMSG (143 aa)) form the SLD domain. Ser50, Ser60, Ser65, Ser68, Ser72, Ser73, and Ser81 each carry phosphoserine. A disordered region spans residues 58–81 (LKSPSDLSPESPVLSSPPKRKDAS). Residues 60–74 (SPSDLSPESPVLSSP) show a composition bias toward low complexity. Positions 75-179 (PKRKDASLEE…RNKEQREEMS (105 aa)) form a coiled coil.

The protein belongs to the stathmin family. Interacts with STAT3. Interacts with CLU (secreted form); this interaction may act as an important modulator during neuronal differentiation. In terms of processing, N-terminal palmitoylation promotes specific anchoring to the cytosolic leaflet of Golgi membranes and subsequent vesicular trafficking along dendrites and axons. Neuronal Stathmins are substrates for palmitoyltransferases ZDHHC3, ZDHHC7 and ZDHHC15. In terms of tissue distribution, neuron specific.

It is found in the golgi apparatus. The protein localises to the cell projection. Its subcellular location is the growth cone. The protein resides in the axon. It localises to the cytoplasm. It is found in the cytosol. In terms of biological role, exhibits microtubule-destabilizing activity, which is antagonized by STAT3. The sequence is that of Stathmin-3 (Stmn3) from Rattus norvegicus (Rat).